The sequence spans 373 residues: Cell surface Cu-only superoxide dismutase ARB_03674 (373 aa).

A signal peptide spans 1 to 55; sequence MIWKQPPRRMGEMGGSLSRRFGNAAASWAVWRVSRSCFSLLFFFYFFLFFSSSSL. Asn75 and Asn141 each carry an N-linked (GlcNAc...) asparagine glycan. Residues His194, His196, and His212 each coordinate Cu cation. Residues Cys206 and Cys289 are joined by a disulfide bond. N-linked (GlcNAc...) asparagine glycosylation is found at Asn254 and Asn274. Cu cation is bound at residue His280. 2 N-linked (GlcNAc...) asparagine glycosylation sites follow: Asn283 and Asn291. The segment at 329-348 is disordered; that stretch reads GHAPTISATYTPTPTPSPPA. The segment covering 331 to 340 has biased composition (low complexity); that stretch reads APTISATYTP. The GPI-anchor amidated glycine moiety is linked to residue Gly352. Residues 353-373 constitute a propeptide, removed in mature form; sequence AGRLVGFSLGAIMAALVPLAL.

The protein belongs to the Cu-Zn superoxide dismutase family. As to quaternary structure, monomer. Cu cation serves as cofactor. In terms of processing, the GPI-anchor is attached to the protein in the endoplasmic reticulum and serves to target the protein to the cell surface. There, the glucosamine-inositol phospholipid moiety is cleaved off and the GPI-modified mannoprotein is covalently attached via its lipidless GPI glycan remnant to the 1,6-beta-glucan of the outer cell wall layer.

It is found in the secreted. The protein resides in the cell wall. Its subcellular location is the cell membrane. The enzyme catalyses 2 superoxide + 2 H(+) = H2O2 + O2. Its function is as follows. Superoxide dismutases serve to convert damaging superoxide radicals, a key form of ROS, to less damaging hydrogen peroxide that can be converted into water by catalase action. Degrades host-derived reactive oxygen species to escape innate immune surveillance. Involved in the occurrence of miconazole-tolerant persisters in biofilms. Persisters are cells that survive high doses of an antimicrobial agent. The unusual attributes of SOD5-like fungal proteins, including the absence of zinc and an open active site that readily captures extracellular copper, make these SODs well suited to meet challenges in zinc and copper availability at the host-pathogen interface. The sequence is that of Cell surface Cu-only superoxide dismutase ARB_03674 from Arthroderma benhamiae (strain ATCC MYA-4681 / CBS 112371) (Trichophyton mentagrophytes).